Reading from the N-terminus, the 248-residue chain is Pyruvate formate-lyase-activating enzyme (248 aa).

The Radical SAM core domain occupies 17–248 (VDGPGIRFIV…NKILETSSYK (232 aa)). Cysteine 31, cysteine 35, and cysteine 38 together coordinate [4Fe-4S] cluster. Residues 37–39 (FCH), glycine 80, 135–137 (DIK), and histidine 208 each bind S-adenosyl-L-methionine.

This sequence belongs to the organic radical-activating enzymes family. It depends on [4Fe-4S] cluster as a cofactor.

It is found in the cytoplasm. It catalyses the reaction glycyl-[formate C-acetyltransferase] + reduced [flavodoxin] + S-adenosyl-L-methionine = glycin-2-yl radical-[formate C-acetyltransferase] + semiquinone [flavodoxin] + 5'-deoxyadenosine + L-methionine + H(+). In terms of biological role, activation of pyruvate formate-lyase under anaerobic conditions by generation of an organic free radical, using S-adenosylmethionine and reduced flavodoxin as cosubstrates to produce 5'-deoxy-adenosine. This chain is Pyruvate formate-lyase-activating enzyme (pflA), found in Listeria innocua serovar 6a (strain ATCC BAA-680 / CLIP 11262).